The primary structure comprises 419 residues: F-box/LRR-repeat protein At1g67190 (419 aa).

Positions 1 to 48 constitute an F-box domain; that stretch reads MDYLPVEVIGNILSRLGGARDVVIASATCRKWREACRKHLQTLSFNSA. LRR repeat units follow at residues 53–82, 96–124, 133–157, 158–183, 185–209, 245–272, 273–297, 301–326, and 356–381; these read YRDL…SIMM, WLMY…EICG, LAHN…LSLS, YVSI…ELVS, EIAM…YFDG, HFKL…DVNH, FTMV…RLWD, DDDD…SLSY, and INDV…IIYG.

This chain is F-box/LRR-repeat protein At1g67190, found in Arabidopsis thaliana (Mouse-ear cress).